Reading from the N-terminus, the 2785-residue chain is Testis-expressed protein 15 (2785 aa).

The span at 262 to 274 (SSSFPSSLSNAFS) shows a compositional bias: low complexity. Disordered stretches follow at residues 262 to 331 (SSSF…PSSD), 596 to 620 (EQRD…SEKQ), 661 to 683 (NGKP…APND), 904 to 924 (TEST…GMCS), 943 to 1064 (VQES…QGRI), 2276 to 2458 (NRQE…TNDK), 2470 to 2511 (DIDA…LVPD), and 2571 to 2601 (TQPI…GNSA). Basic and acidic residues predominate over residues 275-286 (DVRKQKHSEEQV). Residues 314–331 (TCSNDSQGHFSQESPSSD) are compositionally biased toward polar residues. The segment covering 596 to 611 (EQRDDKNPNEAKEHNT) has biased composition (basic and acidic residues). Composition is skewed to polar residues over residues 962–989 (HNTH…TVMN) and 1021–1031 (HASSSRGQNIA). The span at 1033-1042 (KDLREHETHE) shows a compositional bias: basic and acidic residues. Polar residues-rich tracts occupy residues 1049-1064 (SHGS…QGRI), 2291-2314 (DSSQ…NISD), 2327-2338 (EVSQGKGNTDTV), 2353-2387 (NIQT…SISA), 2394-2415 (RQSS…CTPK), 2431-2454 (ASLT…SVAE), 2491-2502 (DHTQISPSNLTA), and 2585-2601 (DAPN…GNSA).

The protein belongs to the TEX15 family. In terms of assembly, interacts with PIWIL4. Interacts with PIWIL2. In terms of tissue distribution, detected in testis and ovary, and at lower levels in lung and brain.

Its subcellular location is the cytoplasm. It localises to the nucleus. Required during spermatogenesis for normal chromosome synapsis and meiotic recombination in germ cells. Necessary for formation of DMC1 and RAD51 foci on meiotic chromosomes, suggesting a specific role in DNA double-stranded break repair. Essential executor of PIWIL4-piRNA pathway directed transposon DNA methylation and silencing in the male embryonic germ cells. PIWIL4-piRNA binds to nascent transposon transcripts and interacts with TEX15, which may in turn recruit the epigenetic silencing machinery to the transposon loci. Not required for piRNA biosynthesis. The chain is Testis-expressed protein 15 from Mus musculus (Mouse).